Reading from the N-terminus, the 1050-residue chain is MPPPDSNPGSFRDHLKHDNKNNNSSTTSKGKQRYTPLHDSIPEEIASPRSASASSSFDLDPDLENQSRNDYKLRPLARSSSTNGGHNYSTAYIPVIRDEGDDVETYLDSITEAEQELLSLSKQYDFADDSDDFDSDDDAALRRKVQKQEQRRRRERLKAKVWTPVKYARIWRRTLVVVIVALALLVWGFLRFTAAQRQGPKVWPMLPSDSWFPSPKGGTLKHWEESYRKAQSLVRNMTLIEKVNITTGTGWQMGMCVGNTGPAELVKFPSLCLQDGPQGLRYADHVTAFPAGITTGSTWNRTLMRERGIAMGREARLKGVNVLLGPSIGPIGMMPAGGRNWEGFGSDPVLQGVAAAETIRGIQSNGVMATAKHFLMNEQEHFRQPFEWGISTALSSNVGDRALHEVFAWPFAESIRADVASVMCSYQMVNNSHACENSKLLNGILKDELGFQGFVQSDWLAQRSGINSALGGLDMSMPGDGLHWTDGKSLWGRELTRAVLNTSIPMERLNDMVTRIVAAWYQFEQDEWERPPPEGNGGPNFSSWTGGDVGWLHAGSNDGLYAVVNQYIDAQGTGPEAHSIIARKVAAEGTVLLKNVDHTLPLSRNASGPSGVMRVGIYGDDAGPAQGPNACPDRGCNQGTLATGWGSGTVDFPYLVSPLEALETAWKTEVEMTAFLRNAVMPADVADKDLCLVFANADSGEGFISAGGIHGDRNDLFLQKGGDTLIRTVASHCGEGQGKTVVVIHAVGPVVMESWIDLPGVHAVLLANLPGQESGNALMDVLFGDVDASGRLPYTIGKSLEEYGTEAQVLYEPNAPVPQVDLLDALFIDYRHFDQYNITPRFEFGFGLSYTTFKLKDLHVRSLQSKSRSPAARPAAAVSPPEYNTTLPDPALALFPPGFQPVYKYIYPYLPSLDGTAPANYSYYPKDYNQTQGPSPAGGGAGGNPALFQEMASVSVQVQNTGDRKGQEVVQVYVSFPSDEKVKIDFPERVLRNFTKVELEPGERREVQMTLSRKDLSYWSVREQNWVMPDGDFQIWVGRSSRDLPLQAKY.

The segment at 1–87 (MPPPDSNPGS…RSSSTNGGHN (87 aa)) is disordered. The Cytoplasmic segment spans residues 1–174 (MPPPDSNPGS…VKYARIWRRT (174 aa)). Basic and acidic residues predominate over residues 11 to 20 (FRDHLKHDNK). The segment covering 47–56 (SPRSASASSS) has biased composition (low complexity). Over residues 78–87 (RSSSTNGGHN) the composition is skewed to polar residues. Residues 175–195 (LVVVIVALALLVWGFLRFTAA) form a helical; Signal-anchor for type II membrane protein membrane-spanning segment. The Extracellular portion of the chain corresponds to 196-1050 (QRQGPKVWPM…SRDLPLQAKY (855 aa)). N-linked (GlcNAc...) asparagine glycans are attached at residues asparagine 236, asparagine 244, asparagine 300, and asparagine 430. Aspartate 458 is a catalytic residue. Residues asparagine 501, asparagine 540, asparagine 605, asparagine 884, asparagine 920, asparagine 929, and asparagine 993 are each glycosylated (N-linked (GlcNAc...) asparagine).

Belongs to the glycosyl hydrolase 3 family.

Its subcellular location is the cell membrane. It catalyses the reaction Hydrolysis of terminal, non-reducing beta-D-glucosyl residues with release of beta-D-glucose.. It participates in glycan metabolism; cellulose degradation. Its function is as follows. Beta-glucosidases are one of a number of cellulolytic enzymes involved in the degradation of cellulosic biomass. Catalyzes the last step releasing glucose from the inhibitory cellobiose. This Aspergillus clavatus (strain ATCC 1007 / CBS 513.65 / DSM 816 / NCTC 3887 / NRRL 1 / QM 1276 / 107) protein is Probable beta-glucosidase E (bglE).